The primary structure comprises 416 residues: MQLFAFGVNHHTAPLDIREHVAFSEESMQHALHDLVGHQLVKEAAIVSTCNRTEIYCNTDTPDKAVGWLADFHHLRFGDLEPYLYRLLREQAVKHAFRVASGLDSMVLGEPQILGQMKNAVKSAEQAGTLGLLLHKMFQRTFFVAKEVRTSTEIGACSVSMAAASARLAERIFGNISEQKVLFIGAGEMIELCAAHFVARHPVHVTVANRTVERAEALARRFNAHPISLGELPDQLALHDIVVTSTASPLPILGKGMLERAIKQRKHRPVFIVDLAVPRDVEAEVAELDDVFLYYVDDLADIVKEGLDNRQGAVTQAETIIESNVVDFMHWVATRQSVPTIRALRNQAERYRRHELARAHKLLAKGEDPEKVLESLSSGLTNKFLHLPSSVLNHATDDEREQLIELVNRLYQLHHS.

Residues 49–52 (TCNR), Ser-105, 110–112 (EPQ), and Gln-116 contribute to the substrate site. The active-site Nucleophile is Cys-50. 185 to 190 (GAGEMI) contributes to the NADP(+) binding site.

It belongs to the glutamyl-tRNA reductase family. As to quaternary structure, homodimer.

The enzyme catalyses (S)-4-amino-5-oxopentanoate + tRNA(Glu) + NADP(+) = L-glutamyl-tRNA(Glu) + NADPH + H(+). It functions in the pathway porphyrin-containing compound metabolism; protoporphyrin-IX biosynthesis; 5-aminolevulinate from L-glutamyl-tRNA(Glu): step 1/2. Functionally, catalyzes the NADPH-dependent reduction of glutamyl-tRNA(Glu) to glutamate 1-semialdehyde (GSA). This chain is Glutamyl-tRNA reductase, found in Nitrosomonas europaea (strain ATCC 19718 / CIP 103999 / KCTC 2705 / NBRC 14298).